Here is a 418-residue protein sequence, read N- to C-terminus: Tryptophan synthase beta chain (418 aa).

Positions 1-18 (MTSTLPNASTPDPASLQP) are enriched in polar residues. A disordered region spans residues 1–23 (MTSTLPNASTPDPASLQPSVRPG). Residue K111 is modified to N6-(pyridoxal phosphate)lysine.

The protein belongs to the TrpB family. In terms of assembly, tetramer of two alpha and two beta chains. Requires pyridoxal 5'-phosphate as cofactor.

It catalyses the reaction (1S,2R)-1-C-(indol-3-yl)glycerol 3-phosphate + L-serine = D-glyceraldehyde 3-phosphate + L-tryptophan + H2O. Its pathway is amino-acid biosynthesis; L-tryptophan biosynthesis; L-tryptophan from chorismate: step 5/5. Its function is as follows. The beta subunit is responsible for the synthesis of L-tryptophan from indole and L-serine. The protein is Tryptophan synthase beta chain of Parasynechococcus marenigrum (strain WH8102).